Reading from the N-terminus, the 376-residue chain is MELVAVKEGLARILVPKAERIYDAPVFYNPVMSLNRDISVLAVKVLGPKRVLDALSATGIRGIRYALETPAEEVWLNDISEEAYGLMKKNASLNIDGELYEEGDRSYLWGEKLVVINKGDANRLMAENFRYFDFLDLDPFGSPVEFLDTALRSVRRNGVLAVTATDTGVLCGAYRNACLRKYLAEPIRGPLCHEAGLRILIGTVVRYAAKYDLGVEVLLAYHRDHYFRAFLKLKSGAKKADKSLSQLGFLWADKSGRFEYRRGFLPDKPGASGPLWLGPLKDESFVEELLESARDHPLAHKKTLSFLQLISEELDVPFHYDTHTLARACSLTPPKLDVIIQRLRELGHSATKTHFSPTSVKTDAPFGVVAEVMKNV.

The region spanning 4–373 (VAVKEGLARI…APFGVVAEVM (370 aa)) is the Trm1 methyltransferase domain. The S-adenosyl-L-methionine site is built by Arg-36, Arg-61, Asp-78, Asp-120, and Ala-121.

The protein belongs to the class I-like SAM-binding methyltransferase superfamily. Trm1 family.

It carries out the reaction guanosine(26) in tRNA + 2 S-adenosyl-L-methionine = N(2)-dimethylguanosine(26) in tRNA + 2 S-adenosyl-L-homocysteine + 2 H(+). In terms of biological role, dimethylates a single guanine residue at position 26 of a number of tRNAs using S-adenosyl-L-methionine as donor of the methyl groups. This is tRNA (guanine(26)-N(2))-dimethyltransferase from Thermococcus kodakarensis (strain ATCC BAA-918 / JCM 12380 / KOD1) (Pyrococcus kodakaraensis (strain KOD1)).